Consider the following 712-residue polypeptide: Aryl hydrocarbon receptor nuclear translocator 2 (712 aa).

The tract at residues 36 to 73 (AGAMPARGGKRRSGMDFDDEDGEGPSKFSRENHSEIER) is disordered. The residue at position 42 (Arg-42) is an Omega-N-methylarginine. The span at 63 to 73 (FSRENHSEIER) shows a compositional bias: basic and acidic residues. Positions 63 to 116 (FSRENHSEIERRRRNKMTQYITELSDMVPTCSALARKPDKLTILRMAVSHMKSM) constitute a bHLH domain. 2 PAS domains span residues 134-209 (TEQE…MTGR) and 323-393 (PVCM…VKLK). The region spanning 398-441 (SVMYRFRTKNREWLLIRTSSFTFQNPYSDEIEYVICTNTNVKQL) is the PAC domain. The tract at residues 573–712 (AWTGSRPPFP…DLGMFPPFSE (140 aa)) is disordered. Low complexity-rich tracts occupy residues 597-626 (SSHPYPADPSSYSPLSSPAASSPSGNAYPS) and 653-675 (SQWQSQHHGQQSGEQHSHQQPGQ).

In terms of assembly, efficient DNA binding requires dimerization with another bHLH protein. Heterodimer with NPAS4 or SIM1. Heterodimer with the aryl hydrocarbon receptor (AHR) or the SIM1 protein. Interacts with TACC3. Restricted to adult brain and kidney.

The protein resides in the nucleus. In terms of biological role, transcription factor that plays a role in the development of the hypothalamo-pituitary axis, postnatal brain growth, and visual and renal function. Specifically recognizes the xenobiotic response element (XRE). This Mus musculus (Mouse) protein is Aryl hydrocarbon receptor nuclear translocator 2 (Arnt2).